An 806-amino-acid chain; its full sequence is Acetyl-CoA decarbonylase/synthase complex subunit alpha 1 (806 aa).

Residues Cys-73, Cys-76, Cys-77, Cys-79, Cys-84, and Cys-94 each contribute to the [4Fe-4S] cluster site. His-117 serves as a coordination point for CO. Positions 250, 278, and 323 each coordinate [Ni-4Fe-4S] cluster. 4Fe-4S ferredoxin-type domains lie at Asp-407–Ala-436 and Tyr-445–Ile-475. 8 residues coordinate [4Fe-4S] cluster: Cys-417, Cys-420, Cys-423, Cys-427, Cys-455, Cys-458, Cys-461, and Cys-465. The [Ni-4Fe-4S] cluster site is built by Cys-523, Cys-552, and Cys-587.

The protein belongs to the Ni-containing carbon monoxide dehydrogenase family. Heterotetramer of two alpha and two epsilon subunits. The ACDS complex is made up of alpha, epsilon, beta, gamma and delta subunits with a probable stoichiometry of (alpha(2)epsilon(2))(4)-beta(8)-(gamma(1)delta(1))(8). [4Fe-4S] cluster serves as cofactor. Requires [Ni-4Fe-4S] cluster as cofactor.

The enzyme catalyses CO + 2 oxidized [2Fe-2S]-[ferredoxin] + H2O = 2 reduced [2Fe-2S]-[ferredoxin] + CO2 + 2 H(+). It participates in one-carbon metabolism; methanogenesis from acetate. Part of the ACDS complex that catalyzes the reversible cleavage of acetyl-CoA, allowing growth on acetate as sole source of carbon and energy. The alpha-epsilon subcomponent functions as a carbon monoxide dehydrogenase. In Methanosarcina thermophila, this protein is Acetyl-CoA decarbonylase/synthase complex subunit alpha 1.